Consider the following 96-residue polypeptide: Conglutin delta 4 (96 aa).

Residues 1–22 (MARLTILIAFVAALVLVVHTSA) form the signal peptide. 2 cysteine pairs are disulfide-bonded: Cys-29–Cys-78 and Cys-80–Cys-91.

This sequence belongs to the 2S seed storage albumins family.

It is found in the endoplasmic reticulum. The protein is Conglutin delta 4 of Lupinus angustifolius (Narrow-leaved blue lupine).